A 538-amino-acid chain; its full sequence is Phosphoenolpyruvate carboxykinase (ATP) (538 aa).

Residues R61, Y195, and K201 each contribute to the substrate site. Residues K201, H220, and 236 to 244 (GLSGTGKTT) contribute to the ATP site. Positions 201 and 220 each coordinate Mn(2+). D257 serves as a coordination point for Mn(2+). 3 residues coordinate ATP: E285, R323, and T449. R323 serves as a coordination point for substrate.

This sequence belongs to the phosphoenolpyruvate carboxykinase (ATP) family. It depends on Mn(2+) as a cofactor.

Its subcellular location is the cytoplasm. It carries out the reaction oxaloacetate + ATP = phosphoenolpyruvate + ADP + CO2. The protein operates within carbohydrate biosynthesis; gluconeogenesis. Functionally, involved in the gluconeogenesis. Catalyzes the conversion of oxaloacetate (OAA) to phosphoenolpyruvate (PEP) through direct phosphoryl transfer between the nucleoside triphosphate and OAA. The sequence is that of Phosphoenolpyruvate carboxykinase (ATP) from Afipia carboxidovorans (strain ATCC 49405 / DSM 1227 / KCTC 32145 / OM5) (Oligotropha carboxidovorans).